A 326-amino-acid polypeptide reads, in one-letter code: MYGIEYTTFLIYLISIILFNYILKSITRMMDYIIYKFLLIVTIASIVVNAQNYGINLPITGSMDASYVNATKDKPFLTSTLCLYYPTEARTEINDNEWTSTLSQLFLTKGWPTGSVYFKEYDDIATFSVDPQLYCDYNIVLMRYNSSLELDMSELANLILNEWLCNPMDITLYYYQQTDEANKWIAMGQSCTIKVCPLNTQTLGIGCQTTNARTFEEVATAEKLVITDVVDGVNHKLDVTTATCTIRNCKKLGPRENVAVIQVGGADILNITSDPTTAPQTERMMRINWKKWWQVFYTIVDYVNQIVQAMSKMSGSLNSAAFYYRV.

The signal sequence occupies residues 1 to 50 (MYGIEYTTFLIYLISIILFNYILKSITRMMDYIIYKFLLIVTIASIVVNA). Asn-69 carries an N-linked (GlcNAc...) asparagine; by host glycan. A disulfide bond links Cys-82 and Cys-135. Asp-95 contacts Ca(2+). N-linked (GlcNAc...) asparagine; by host glycosylation is present at Asn-145. Positions 165 to 167 (CNP) are CNP motif; interaction with ITGAV/ITGB3. 3 disulfides stabilise this stretch: Cys-165–Cys-249, Cys-191–Cys-244, and Cys-196–Cys-207. Gln-177, Gly-206, Thr-214, Glu-216, Asp-228, Val-229, and Asp-231 together coordinate Ca(2+). Positions 237-239 (LDV) are LVD motif; interaction with ITGA4/ITGB1 heterodimer. The GPR motif; interaction with ITGAX/ITGB2 stretch occupies residues 253–255 (GPR). N-linked (GlcNAc...) asparagine; by host glycosylation occurs at Asn-270. Asp-301 serves as a coordination point for Ca(2+).

The protein belongs to the rotavirus VP7 family. As to quaternary structure, homotrimer; disulfide-linked. 2 Ca(2+) ions bound at each subunit interface in the trimer hold the trimer together. Interacts with the intermediate capsid protein VP6. Interacts with the outer capsid protein VP5*. In terms of processing, N-glycosylated. Post-translationally, the N-terminus is blocked possibly by pyroglutamic acid.

The protein localises to the virion. The protein resides in the host endoplasmic reticulum lumen. In terms of biological role, calcium-binding protein that interacts with rotavirus cell receptors once the initial attachment by VP4 has been achieved. Rotavirus attachment and entry into the host cell probably involves multiple sequential contacts between the outer capsid proteins VP4 and VP7, and the cell receptors. Following entry into the host cell, low intracellular or intravesicular Ca(2+) concentration probably causes the calcium-stabilized VP7 trimers to dissociate from the virion. This step is probably necessary for the membrane-disrupting entry step and the release of VP4, which is locked onto the virion by VP7. The polypeptide is Outer capsid glycoprotein VP7 (Bos taurus (Bovine)).